The chain runs to 143 residues: Transcriptional regulator MraZ (143 aa).

2 consecutive SpoVT-AbrB domains span residues T5–E47 and A76–T119.

The protein belongs to the MraZ family. In terms of assembly, forms oligomers.

It is found in the cytoplasm. The protein localises to the nucleoid. The chain is Transcriptional regulator MraZ from Clavibacter michiganensis subsp. michiganensis (strain NCPPB 382).